Here is a 603-residue protein sequence, read N- to C-terminus: Phosphomethylpyrimidine synthase (603 aa).

Substrate contacts are provided by residues asparagine 224, methionine 253, tyrosine 282, histidine 318, 338–340 (SRG), 379–382 (DGLR), and glutamate 418. Histidine 422 is a Zn(2+) binding site. Tyrosine 445 is a substrate binding site. Histidine 486 contacts Zn(2+). The [4Fe-4S] cluster site is built by cysteine 566, cysteine 569, and cysteine 574.

Belongs to the ThiC family. Homodimer. The cofactor is [4Fe-4S] cluster.

The enzyme catalyses 5-amino-1-(5-phospho-beta-D-ribosyl)imidazole + S-adenosyl-L-methionine = 4-amino-2-methyl-5-(phosphooxymethyl)pyrimidine + CO + 5'-deoxyadenosine + formate + L-methionine + 3 H(+). The protein operates within cofactor biosynthesis; thiamine diphosphate biosynthesis. Its function is as follows. Catalyzes the synthesis of the hydroxymethylpyrimidine phosphate (HMP-P) moiety of thiamine from aminoimidazole ribotide (AIR) in a radical S-adenosyl-L-methionine (SAM)-dependent reaction. In Xylella fastidiosa (strain Temecula1 / ATCC 700964), this protein is Phosphomethylpyrimidine synthase.